Reading from the N-terminus, the 1141-residue chain is Probable ubiquitin carboxyl-terminal hydrolase 2 (1141 aa).

Threonine 112 is subject to Phosphothreonine. At serine 113 the chain carries Phosphoserine. The residue at position 115 (threonine 115) is a Phosphothreonine. A USP domain is found at 614–1124 (IGLENTGNLC…NPYMLTYIRK (511 aa)). The active-site Nucleophile is cysteine 623. Threonine 721 bears the Phosphothreonine mark. Serine 722 bears the Phosphoserine mark. A disordered region spans residues 748 to 770 (EEQAQGLEQEQGQDEAKSPAEQS). Histidine 1076 serves as the catalytic Proton acceptor.

It belongs to the peptidase C19 family.

The catalysed reaction is Thiol-dependent hydrolysis of ester, thioester, amide, peptide and isopeptide bonds formed by the C-terminal Gly of ubiquitin (a 76-residue protein attached to proteins as an intracellular targeting signal).. The protein is Probable ubiquitin carboxyl-terminal hydrolase 2 (ubp2) of Schizosaccharomyces pombe (strain 972 / ATCC 24843) (Fission yeast).